A 184-amino-acid polypeptide reads, in one-letter code: ATP synthase subunit b, chloroplastic (184 aa).

A helical transmembrane segment spans residues 27-49; the sequence is LATNPINLSVVFGVLIFFGKGVL.

This sequence belongs to the ATPase B chain family. As to quaternary structure, F-type ATPases have 2 components, F(1) - the catalytic core - and F(0) - the membrane proton channel. F(1) has five subunits: alpha(3), beta(3), gamma(1), delta(1), epsilon(1). F(0) has four main subunits: a(1), b(1), b'(1) and c(10-14). The alpha and beta chains form an alternating ring which encloses part of the gamma chain. F(1) is attached to F(0) by a central stalk formed by the gamma and epsilon chains, while a peripheral stalk is formed by the delta, b and b' chains.

It is found in the plastid. The protein resides in the chloroplast thylakoid membrane. Its function is as follows. F(1)F(0) ATP synthase produces ATP from ADP in the presence of a proton or sodium gradient. F-type ATPases consist of two structural domains, F(1) containing the extramembraneous catalytic core and F(0) containing the membrane proton channel, linked together by a central stalk and a peripheral stalk. During catalysis, ATP synthesis in the catalytic domain of F(1) is coupled via a rotary mechanism of the central stalk subunits to proton translocation. In terms of biological role, component of the F(0) channel, it forms part of the peripheral stalk, linking F(1) to F(0). The polypeptide is ATP synthase subunit b, chloroplastic (Nasturtium officinale (Watercress)).